A 37-amino-acid polypeptide reads, in one-letter code: Protamine Z3 (37 aa).

A disordered region spans residues 1–37; it reads ARSRSRRSYGRGRRRGGRRRRRRRRRRRGGRRGRRSR.

In terms of tissue distribution, testis.

It localises to the nucleus. The protein localises to the chromosome. Its function is as follows. Protamines substitute for histones in the chromatin of sperm during the haploid phase of spermatogenesis. They compact sperm DNA into a highly condensed, stable and inactive complex. In Scyliorhinus canicula (Small-spotted catshark), this protein is Protamine Z3.